A 118-amino-acid chain; its full sequence is Immunoglobulin heavy variable 4-30-2 (118 aa).

The first 19 residues, 1-19 (MKHLWFFLLLVAAPRWVLS), serve as a signal peptide directing secretion. Positions 20–44 (QLQLQESGSGLVKPSQTLSLTCAVS) are framework-1. In terms of domain architecture, Ig-like spans 20-118 (QLQLQESGSG…ADTAVYYCAR (99 aa)). A disulfide bridge connects residues Cys-41 and Cys-116. The segment at 45–54 (GGSISSGGYS) is complementarity-determining-1. The framework-2 stretch occupies residues 55–71 (WSWIRQPPGKGLEWIGY). Positions 72-78 (IYHSGST) are complementarity-determining-2. A framework-3 region spans residues 79-116 (YYNPSLKSRVTISVDRSKNQFSLKLSSVTAADTAVYYC). The interval 117–118 (AR) is complementarity-determining-3.

In terms of assembly, immunoglobulins are composed of two identical heavy chains and two identical light chains; disulfide-linked.

It localises to the secreted. The protein resides in the cell membrane. Its function is as follows. V region of the variable domain of immunoglobulin heavy chains that participates in the antigen recognition. Immunoglobulins, also known as antibodies, are membrane-bound or secreted glycoproteins produced by B lymphocytes. In the recognition phase of humoral immunity, the membrane-bound immunoglobulins serve as receptors which, upon binding of a specific antigen, trigger the clonal expansion and differentiation of B lymphocytes into immunoglobulins-secreting plasma cells. Secreted immunoglobulins mediate the effector phase of humoral immunity, which results in the elimination of bound antigens. The antigen binding site is formed by the variable domain of one heavy chain, together with that of its associated light chain. Thus, each immunoglobulin has two antigen binding sites with remarkable affinity for a particular antigen. The variable domains are assembled by a process called V-(D)-J rearrangement and can then be subjected to somatic hypermutations which, after exposure to antigen and selection, allow affinity maturation for a particular antigen. The polypeptide is Immunoglobulin heavy variable 4-30-2 (Homo sapiens (Human)).